Here is a 104-residue protein sequence, read N- to C-terminus: Large ribosomal subunit protein uL24 (104 aa).

The protein belongs to the universal ribosomal protein uL24 family. As to quaternary structure, part of the 50S ribosomal subunit.

One of two assembly initiator proteins, it binds directly to the 5'-end of the 23S rRNA, where it nucleates assembly of the 50S subunit. Functionally, one of the proteins that surrounds the polypeptide exit tunnel on the outside of the subunit. This is Large ribosomal subunit protein uL24 from Clostridium perfringens (strain SM101 / Type A).